We begin with the raw amino-acid sequence, 160 residues long: Cytochrome b6-f complex subunit 4 (160 aa).

A run of 3 helical transmembrane segments spans residues 36–56 (LLYI…GLAV), 95–115 (LLGV…PFLE), and 131–151 (TVFL…TLPI).

Belongs to the cytochrome b family. PetD subfamily. The 4 large subunits of the cytochrome b6-f complex are cytochrome b6, subunit IV (17 kDa polypeptide, petD), cytochrome f and the Rieske protein, while the 4 small subunits are petG, petL, petM and petN. The complex functions as a dimer.

Its subcellular location is the plastid. The protein resides in the chloroplast thylakoid membrane. In terms of biological role, component of the cytochrome b6-f complex, which mediates electron transfer between photosystem II (PSII) and photosystem I (PSI), cyclic electron flow around PSI, and state transitions. The chain is Cytochrome b6-f complex subunit 4 from Sorghum bicolor (Sorghum).